The following is a 220-amino-acid chain: Probable metallo-hydrolase YybB (220 aa).

Residues His-67, His-69, Asp-71, His-72, His-139, Asp-158, and His-200 each contribute to the Zn(2+) site.

The protein belongs to the metallo-beta-lactamase superfamily. Requires Zn(2+) as cofactor.

This Bacillus subtilis (strain 168) protein is Probable metallo-hydrolase YybB (yybB).